The sequence spans 59 residues: Lantibiotic lacticin 3147 A1 (59 aa).

Positions 1–29 (MNKNEIETQPVTWLEEVSDQNFDEDVFGA) are excised as a propeptide. A cross-link (lanthionine (Cys-Ser)) is located at residues 30 to 31 (CS). A 2,3-didehydrobutyrine mark is found at threonine 32 and threonine 34. Serine 36 is modified (2,3-didehydroalanine (Ser)). Residues 38 to 48 (SDYWGNNGAWC) constitute a cross-link (lanthionine (Ser-Cys)). 2 cross-links (beta-methyllanthionine (Thr-Cys)) span residues 49–54 (TLTHEC) and 51–58 (THECMAWC).

Post-translationally, maturation of lantibiotics involves the enzymatic conversion of Thr, and Ser into dehydrated AA and the formation of thioether bonds with cysteine. This is followed by membrane translocation and cleavage of the modified precursor. In terms of processing, it is not established whether the 2,3-didehydrobutyrines are the E- or Z-isomers. In the NMR model they were assumed to be the Z-isomer.

It localises to the secreted. Lanthionine-containing peptide antibiotic (lantibiotic) active on Gram-positive bacteria. The bactericidal activity of lantibiotics is based on depolarization of energized bacterial cytoplasmic membranes, initiated by the formation of aqueous transmembrane pores. When present individually lacticin 3147 A1 exhibits strong activity towards L.lactis strain AM2, weak activity towards L.lactis strain HP and no activity towards L.lactis strain IFPL359, but when combined with lacticin 3147 A2 it displays strong activity towards all three strains. This is Lantibiotic lacticin 3147 A1 from Lactococcus lactis subsp. lactis (Streptococcus lactis).